The chain runs to 421 residues: 5-hydroxytryptamine receptor 1A (421 aa).

Residues 1 to 38 (MDMFSLGQGNNTTTSLEPFGTGGNDTGLSNVTFSYQVI) lie on the Extracellular side of the membrane. Residues asparagine 10, asparagine 11, asparagine 24, and asparagine 30 are each glycosylated (N-linked (GlcNAc...) asparagine). The chain crosses the membrane as a helical span at residues 39 to 59 (TSLLLGTLIFCAVLGNACVVA). At 60–73 (AIALERSLQNVANY) the chain is on the cytoplasmic side. Residues 74 to 98 (LIGSLAVTDLMVSVLVLPMAALYQV) form a helical membrane-spanning segment. The Extracellular portion of the chain corresponds to 99–107 (LNKWTLGQV). The chain crosses the membrane as a helical span at residues 108–132 (TCDLFIALDVLCCTSSILHLCAIAL). Cysteine 109 and cysteine 187 form a disulfide bridge. Serotonin-binding residues include aspartate 116 and cysteine 120. The DRY motif; important for ligand-induced conformation changes signature appears at 133-135 (DRY). Residues 133-152 (DRYWAITDPIDYVNKRTPRR) lie on the Cytoplasmic side of the membrane. The chain crosses the membrane as a helical span at residues 153 to 174 (AAALISLTWLIGFLISIPPMLG). Topologically, residues 175-193 (WRTPEDRSNPNECTISKDH) are extracellular. Residues 194–216 (GYTIYSTFGAFYIPLLLMLVLYG) form a helical membrane-spanning segment. The Cytoplasmic segment spans residues 217–346 (RIFRAARFRI…LARERKTVKT (130 aa)). The interval 237–268 (GAGTSFGTSSAPPPKKSLNGQPGSGDCRRSAE) is disordered. The 1D-myo-inositol 4-phosphate site is built by threonine 314, lysine 345, threonine 346, and glycine 352. A helical transmembrane segment spans residues 347–370 (LGIIMGTFILCWLPFFIVALVLPF). Residues 371-378 (CESSCHMP) are Extracellular-facing. Residues 379–403 (ELLGAIINWLGYSNSLLNPVIYAYF) form a helical membrane-spanning segment. An NPxxY motif; important for ligand-induced conformation changes and signaling motif is present at residues 396–400 (NPVIY). Positions 403, 404, and 405 each coordinate 1D-myo-inositol 4-phosphate. The Cytoplasmic segment spans residues 404-421 (NKDFQNAFKKIIKCKFCR).

It belongs to the G-protein coupled receptor 1 family. 5-hydroxytryptamine receptor subfamily. HTR1A sub-subfamily. As to quaternary structure, heterodimer; heterodimerizes with GPER1. Interacts with YIF1B. Interacts with GPR39 and GALR1. In terms of tissue distribution, most abundantly expressed in midbrain, in dorsal raphe and hippocampus. Detected at lower levels in amygdala and brain cortex.

It is found in the cell membrane. Its subcellular location is the cell projection. The protein resides in the dendrite. Its activity is regulated as follows. G-protein coupled receptor activity is regulated by lipids: phosphatidylinositol 4-phosphate increases HTR1A-mediated activity. Plays a role in the regulation of dopamine and 5-hydroxytryptamine levels in the brain, and thereby affects neural activity, mood and behavior. Plays a role in the response to anxiogenic stimuli. G-protein coupled receptor for 5-hydroxytryptamine (serotonin). Also functions as a receptor for various drugs and psychoactive substances. Ligand binding causes a conformation change that triggers signaling via guanine nucleotide-binding proteins (G proteins) and modulates the activity of downstream effectors, such as adenylate cyclase. HTR1A is coupled to G(i)/G(o) G alpha proteins and mediates inhibitory neurotransmission: signaling inhibits adenylate cyclase activity and activates a phosphatidylinositol-calcium second messenger system that regulates the release of Ca(2+) ions from intracellular stores. Beta-arrestin family members regulate signaling by mediating both receptor desensitization and resensitization processes. The chain is 5-hydroxytryptamine receptor 1A (Htr1a) from Mus musculus (Mouse).